The following is a 708-amino-acid chain: Metal-pseudopaline receptor CntO (708 aa).

An N-terminal signal peptide occupies residues 1–21 (MRVSVSLVLGVGLGCSSPALW). A TBDR plug domain is found at 63–169 (RIEDIPQAIS…PGGTVNLVTK (107 aa)). In terms of domain architecture, TBDR beta-barrel spans 174–708 (ERFARLHASA…NLTMSLTLNY (535 aa)).

It belongs to the TonB-dependent receptor family.

It localises to the cell outer membrane. Its function is as follows. Transports the metallophore pseudopaline, which is involved in the acquisition of nickel and zinc, and thus enables bacterial growth inside the host, where metal access is limited. Is probably involved in the import of pseudopaline-metal complexes. The chain is Metal-pseudopaline receptor CntO from Pseudomonas aeruginosa (strain ATCC 15692 / DSM 22644 / CIP 104116 / JCM 14847 / LMG 12228 / 1C / PRS 101 / PAO1).